Reading from the N-terminus, the 525-residue chain is Ankyrin repeat and SOCS box protein 3 (525 aa).

ANK repeat units lie at residues 9–38, 42–71, 78–107, 111–140, 145–174, 178–207, 211–240, 246–275, 279–308, 315–346, and 348–373; these read DTCS…SIDV, RGWM…SENY, EGFC…DPNA, EETT…NVNG, CGWN…NKEC, FGIT…DVNC, DKAT…DPDL, NWQL…RVCD, NKVS…SPDA, GFSS…QLNE, and HLAY…PSTP. One can recognise an SOCS box domain in the interval 441–505; it reads MLSARASNSS…HDYLLYAEVL (65 aa).

This sequence belongs to the ankyrin SOCS box (ASB) family. In terms of assembly, interacts with ELOB and TNFRSF1B.

It functions in the pathway protein modification; protein ubiquitination. Its function is as follows. Probable substrate-recognition component of a SCF-like ECS (Elongin-Cullin-SOCS-box protein) E3 ubiquitin-protein ligase complex which mediates the ubiquitination and subsequent proteasomal degradation of target proteins. Recognizes TNFRSF1B. This chain is Ankyrin repeat and SOCS box protein 3 (ASB3), found in Bos taurus (Bovine).